The sequence spans 60 residues: Large ribosomal subunit protein bL32 (60 aa).

The segment covering 1 to 19 (MGVPKRKTSKGRRDKRRAH) has biased composition (basic residues). The tract at residues 1-20 (MGVPKRKTSKGRRDKRRAHL) is disordered.

The protein belongs to the bacterial ribosomal protein bL32 family.

The protein is Large ribosomal subunit protein bL32 of Syntrophobacter fumaroxidans (strain DSM 10017 / MPOB).